A 406-amino-acid polypeptide reads, in one-letter code: UPF0754 membrane protein CYB_2931 (406 aa).

2 helical membrane-spanning segments follow: residues 1–21 and 385–405; these read MAFWIYVVPPLAGLVIGYFTN and IVNLGGLLGFLVGCVQVLFLL.

It belongs to the UPF0754 family.

Its subcellular location is the cell inner membrane. This chain is UPF0754 membrane protein CYB_2931, found in Synechococcus sp. (strain JA-2-3B'a(2-13)) (Cyanobacteria bacterium Yellowstone B-Prime).